The sequence spans 205 residues: Potassium-transporting ATPase KdpC subunit (205 aa).

The chain crosses the membrane as a helical span at residues 9–29; it reads VFAVLFLFILGFVYPTVTSLI.

The protein belongs to the KdpC family. In terms of assembly, the system is composed of three essential subunits: KdpA, KdpB and KdpC.

Its subcellular location is the cell membrane. In terms of biological role, part of the high-affinity ATP-driven potassium transport (or Kdp) system, which catalyzes the hydrolysis of ATP coupled with the electrogenic transport of potassium into the cytoplasm. This subunit acts as a catalytic chaperone that increases the ATP-binding affinity of the ATP-hydrolyzing subunit KdpB by the formation of a transient KdpB/KdpC/ATP ternary complex. The sequence is that of Potassium-transporting ATPase KdpC subunit from Thermoplasma acidophilum (strain ATCC 25905 / DSM 1728 / JCM 9062 / NBRC 15155 / AMRC-C165).